Consider the following 349-residue polypeptide: Insulin gene enhancer protein ISL-1 (349 aa).

LIM zinc-binding domains lie at 17-70 and 79-133; these read CVGC…CKRD and CAKC…RADH. The homeobox DNA-binding region spans 181-240; the sequence is TTRVRTVLNEKQLHTLRTCYAANPRPDALMKEQLVEMTGLSPRVIRVWFQNKRCKDKKRS. Positions 262-291 are LIM-binding domain (LID); sequence GTPMVAASPERHDGGLQANPVEVQSYQPPW. The disordered stretch occupies residues 312–349; sequence VNFSEGGPGSNSTGSEVASMSSQLPDTPNSMVASPIEA. Polar residues predominate over residues 321 to 343; the sequence is SNSTGSEVASMSSQLPDTPNSMV.

In terms of assembly, at neuronal promoters, displaces LDB1 from LHX3 LIM domain to form a ternary complex in which ISL1 contacts both LHX3 and LDB1; allosteric structural changes in the DNA binding domain of LHX3, induced by the ISL1:LHX3 interaction, may explain differences in sequence specificity of the different complexes. Interacts with LHX3. Interacts (via C-terminus) with POU4F2 (via C-terminus) isoform 1. Interacts with POU3F2. Interacts with POU4F3. Interacts (via N-terminal domain) with MLIP; the interaction represses ISL1 transactivator activity. Interacts with GCN5/KAT2A. Interactions of ISL1 with MLIP1 or KAT2A may be mutually exclusive. In terms of processing, ubiquitinated probably by WWP1 E3 ubiquitin ligase; ubiquitination is followed by protein degradation. Post-translationally, phosphorylated. In terms of tissue distribution, expressed in subsets of neurons of the adrenal medulla and dorsal root ganglion, inner nuclear and ganglion cell layers in the retina, the pineal and some regions of the brain.

Its subcellular location is the nucleus. In terms of biological role, DNA-binding transcriptional activator. Recognizes and binds to the consensus octamer binding site 5'-ATAATTAA-3' in promoter of target genes. Plays a fundamental role in the gene regulatory network essential for retinal ganglion cell (RGC) differentiation. Cooperates with the transcription factor POU4F2 to achieve maximal levels of expression of RGC target genes and RGC fate specification in the developing retina. Involved in the specification of motor neurons in cooperation with LHX3 and LDB1. Binds to insulin gene enhancer sequences. Essential for heart development. Marker of one progenitor cell population that give rise to the outflow tract, right ventricle, a subset of left ventricular cells, and a large number of atrial cells as well, its function is required for these progenitors to contribute to the heart. Controls the expression of FGF and BMP growth factors in this cell population and is required for proliferation and survival of cells within pharyngeal foregut endoderm and adjacent splanchnic mesoderm as well as for migration of cardiac progenitors into the heart. This chain is Insulin gene enhancer protein ISL-1 (ISL1), found in Homo sapiens (Human).